We begin with the raw amino-acid sequence, 479 residues long: Anaerobic nitric oxide reductase flavorubredoxin (479 aa).

Residues 30–210 (LRGSSYNSYL…PFSRLVTPKI (181 aa)) form a zinc metallo-hydrolase region. Positions 79, 81, 83, 147, 166, and 227 each coordinate Fe cation. Residues 254–393 (ITIFYDTMSN…LCREHGREIA (140 aa)) form the Flavodoxin-like domain. FMN contacts are provided by residues 260–264 (TMSNN) and 342–369 (AFGSHGWSGGAVDRLSTRLQDAGFEMSL). The region spanning 423–474 (GPRMQCSVCQWIYDPAKGEPMQDVAPGTPWSEVPDNFLCPECSLGKDVFDEL) is the Rubredoxin-like domain. Positions 428, 431, 461, and 464 each coordinate Fe cation.

It in the N-terminal section; belongs to the zinc metallo-hydrolase group 3 family. In terms of assembly, homotetramer. Fe cation serves as cofactor. FMN is required as a cofactor.

It localises to the cytoplasm. It functions in the pathway nitrogen metabolism; nitric oxide reduction. In terms of biological role, anaerobic nitric oxide reductase; uses NADH to detoxify nitric oxide (NO), protecting several 4Fe-4S NO-sensitive enzymes. Has at least 2 reductase partners, only one of which (NorW, flavorubredoxin reductase) has been identified. NO probably binds to the di-iron center; electrons enter from the NorW at rubredoxin and are transferred sequentially to the FMN center and the di-iron center. Also able to function as an aerobic oxygen reductase. The chain is Anaerobic nitric oxide reductase flavorubredoxin from Escherichia coli (strain SMS-3-5 / SECEC).